The sequence spans 365 residues: Prostaglandin E2 receptor EP3 subtype (365 aa).

The Extracellular portion of the chain corresponds to 1 to 30; sequence MAGVWAPEHSVEAHSNQSSAADGCGSVSVA. N-linked (GlcNAc...) asparagine glycosylation is present at N16. Residues 31–55 form a helical membrane-spanning segment; the sequence is FPITMMVTGFVGNALAMLLVVRSYR. Residues 56-68 are Cytoplasmic-facing; the sequence is RRESKRKKSFLLC. The helical transmembrane segment at 69-89 threads the bilayer; the sequence is IGWLALTDLVGQLLTSPVVIL. The Extracellular portion of the chain corresponds to 90–108; the sequence is VYLSQRRWEQLDPSGRLCT. A disulfide bridge connects residues C107 and C184. Residues 109–130 form a helical membrane-spanning segment; that stretch reads FFGLTMTVFGLSSLLVASAMAV. At 131 to 151 the chain is on the cytoplasmic side; that stretch reads ERALAIRAPHWYASHMKTRAT. Residues 152–173 form a helical membrane-spanning segment; it reads PVLLGVWLSVLAFALLPVLGVG. Residues 174–203 are Extracellular-facing; the sequence is RYSVQWPGTWCFISTGPAGNETDSAREPGS. N-linked (GlcNAc...) asparagine glycosylation is present at N193. Residues 204–229 form a helical membrane-spanning segment; sequence VAFASAFACLGLLALVVTFACNLATI. The Cytoplasmic segment spans residues 230–259; sequence KALVSRCRAKAAASQSSAQWGRITTETAIQ. The chain crosses the membrane as a helical span at residues 260–283; it reads LMGIMCVLSVCWSPLLIMMLKMIF. Topologically, residues 284–303 are extracellular; the sequence is NQMSVEQCKTQMGKEKECNS. A helical membrane pass occupies residues 304 to 325; the sequence is FLIAVRLASLNQILDPWVYLLL. Residues 326 to 365 lie on the Cytoplasmic side of the membrane; the sequence is RKILLRKFCQIRDHTNYASSSTSLPCPGSSVLMWSDQLER.

It belongs to the G-protein coupled receptor 1 family. Interacts (via C-terminus) with MKLN1. In terms of assembly, does not interact with MKLN1. As to expression, principally expressed in the tubules of the renal medulla. Specific expression is seen in medullary and cortical thick ascending limbs; lower levels are detected in cortical and inner medullary collecting ducts. Not detected significantly in the glomeruli. In the brain, expressed in all types of glial cells.

It localises to the cell membrane. Functionally, receptor for prostaglandin E2 (PGE2). Required for normal development of fever in response to pyrinogens, including IL1B, prostaglandin E2 and bacterial lipopolysaccharide (LPS). Required for normal potentiation of platelet aggregation by prostaglandin E2, and thus plays a role in the regulation of blood coagulation. Required for increased HCO3(-) secretion in the duodenum in response to mucosal acidification, and thereby contributes to the protection of the mucosa against acid-induced ulceration. Not required for normal kidney function, normal urine volume and osmolality. Its function is as follows. Receptor for prostaglandin E2 (PGE2); ligand binding activates a signaling cascade via G(i) proteins that leads to the inhibition of adenylate cyclase. In terms of biological role, receptor for prostaglandin E2 (PGE2); ligand binding can activate several distinct signaling cascades, resulting in activation or inhibition of adenylate cyclase. The chain is Prostaglandin E2 receptor EP3 subtype (Ptger3) from Rattus norvegicus (Rat).